The chain runs to 164 residues: Lipoprotein signal peptidase (164 aa).

4 consecutive transmembrane segments (helical) span residues 12 to 32, 42 to 62, 70 to 90, and 102 to 122; these read WLWL…LILQ, LFPS…SFLA, WFFA…MYRS, and ALII…GFVV. Residues D123 and D141 contribute to the active site. Residues 137–157 form a helical membrane-spanning segment; the sequence is FNLADTAICVGAALIVLEGFL.

Belongs to the peptidase A8 family.

Its subcellular location is the cell inner membrane. It catalyses the reaction Release of signal peptides from bacterial membrane prolipoproteins. Hydrolyzes -Xaa-Yaa-Zaa-|-(S,diacylglyceryl)Cys-, in which Xaa is hydrophobic (preferably Leu), and Yaa (Ala or Ser) and Zaa (Gly or Ala) have small, neutral side chains.. The protein operates within protein modification; lipoprotein biosynthesis (signal peptide cleavage). This protein specifically catalyzes the removal of signal peptides from prolipoproteins. This is Lipoprotein signal peptidase from Shigella flexneri serotype 5b (strain 8401).